A 711-amino-acid polypeptide reads, in one-letter code: Putative membrane protein IgaA homolog (711 aa).

Position 1 (M1) is a topological domain, periplasmic. A helical transmembrane segment spans residues 2-22; the sequence is STIVIFLAALLACSLLAGWLI. Topologically, residues 23-204 are cytoplasmic; it reads KVRSRRRQLP…YALSRPRGLR (182 aa). 2 consecutive transmembrane segments (helical) span residues 205 to 225 and 226 to 246; these read EALL…TPDV and FVPW…WGLF. The Cytoplasmic portion of the chain corresponds to 247-339; that stretch reads APPAKSSLRE…KNFPLQHWLR (93 aa). A helical transmembrane segment spans residues 340–360; that stretch reads STIIAAGSLLVLFMLLFWIPL. The Periplasmic segment spans residues 361–655; sequence DMPLKFTLSW…IPDRSGLWRY (295 aa). Residues 656–676 form a helical membrane-spanning segment; that stretch reads LSTTLLLLTMLGSAIYNGVQA. Over 677-711 the chain is Cytoplasmic; the sequence is WRRYQRHRTRMMEIQAYYESCLNPQLITPSESLIE.

This sequence belongs to the IgaA family.

The protein localises to the cell inner membrane. The sequence is that of Putative membrane protein IgaA homolog (yrfF) from Escherichia coli (strain K12).